Here is a 124-residue protein sequence, read N- to C-terminus: Thioredoxin domain-containing protein C21C3.12c (124 aa).

Residues 37–124 (PWCPTVRAAL…ANKFSKFIDI (88 aa)) form the Thioredoxin domain. Cys-39 (nucleophile) is an active-site residue.

The protein belongs to the thioredoxin family.

It localises to the cytoplasm. It is found in the nucleus. The protein is Thioredoxin domain-containing protein C21C3.12c of Schizosaccharomyces pombe (strain 972 / ATCC 24843) (Fission yeast).